We begin with the raw amino-acid sequence, 610 residues long: UvrABC system protein C (610 aa).

Positions 16–94 (SQPGVYRMYD…IKLYQPRYNV (79 aa)) constitute a GIY-YIG domain. Residues 204–239 (DQVLTQLIARMEKASQSLEFEEAARIRDQIQAVRRV) enclose the UVR domain. The disordered stretch occupies residues 540 to 559 (HAISGHRKKRAKVKSTSSLE). The segment covering 543 to 552 (SGHRKKRAKV) has biased composition (basic residues).

This sequence belongs to the UvrC family. Interacts with UvrB in an incision complex.

The protein resides in the cytoplasm. In terms of biological role, the UvrABC repair system catalyzes the recognition and processing of DNA lesions. UvrC both incises the 5' and 3' sides of the lesion. The N-terminal half is responsible for the 3' incision and the C-terminal half is responsible for the 5' incision. The chain is UvrABC system protein C from Klebsiella pneumoniae (strain 342).